The following is a 466-amino-acid chain: Uronate isomerase (466 aa).

The protein belongs to the metallo-dependent hydrolases superfamily. Uronate isomerase family.

It catalyses the reaction D-glucuronate = D-fructuronate. The catalysed reaction is aldehydo-D-galacturonate = keto-D-tagaturonate. The protein operates within carbohydrate metabolism; pentose and glucuronate interconversion. The chain is Uronate isomerase from Clostridium perfringens (strain 13 / Type A).